A 585-amino-acid chain; its full sequence is Proline--tRNA ligase (585 aa).

This sequence belongs to the class-II aminoacyl-tRNA synthetase family. ProS type 1 subfamily. As to quaternary structure, homodimer.

Its subcellular location is the cytoplasm. The catalysed reaction is tRNA(Pro) + L-proline + ATP = L-prolyl-tRNA(Pro) + AMP + diphosphate. Functionally, catalyzes the attachment of proline to tRNA(Pro) in a two-step reaction: proline is first activated by ATP to form Pro-AMP and then transferred to the acceptor end of tRNA(Pro). As ProRS can inadvertently accommodate and process non-cognate amino acids such as alanine and cysteine, to avoid such errors it has two additional distinct editing activities against alanine. One activity is designated as 'pretransfer' editing and involves the tRNA(Pro)-independent hydrolysis of activated Ala-AMP. The other activity is designated 'posttransfer' editing and involves deacylation of mischarged Ala-tRNA(Pro). The misacylated Cys-tRNA(Pro) is not edited by ProRS. The sequence is that of Proline--tRNA ligase from Corynebacterium diphtheriae (strain ATCC 700971 / NCTC 13129 / Biotype gravis).